The sequence spans 310 residues: NADP-dependent D-sorbitol-6-phosphate dehydrogenase (310 aa).

Residue Y48 is the Proton donor of the active site. A substrate-binding site is contributed by H108. 210-272 (TPLGGAAANK…SSKIQRLKEN (63 aa)) serves as a coordination point for NADP(+).

This sequence belongs to the aldo/keto reductase family.

The enzyme catalyses D-sorbitol 6-phosphate + NADP(+) = aldehydo-D-glucose 6-phosphate + NADPH + H(+). Synthesizes sorbitol-6-phosphate, a key intermediate in the synthesis of sorbitol which is a major photosynthetic product in many members of the Rosaceae family. The protein is NADP-dependent D-sorbitol-6-phosphate dehydrogenase (S6PDH) of Malus domestica (Apple).